The chain runs to 801 residues: Na(+)/H(+) antiporter subunit A1 (801 aa).

21 helical membrane passes run 4–25 (LHIAVILPLIFALIIPILYRFF), 30–49 (LGWFVLPVPIVIFIYMLTLI), 79–101 (LGLLFSLLISGIGSLVVLYSIGY), 108–127 (LGNFYCYLLLFMGAMLGVVL), 131–153 (VIILYLFWELTSFSSFLLISFWR), 166–188 (LIITVFGGLSLLGGIILLAIPTQ), 208–230 (FIFAMILIMIGAFTKSAQFPFYI), 243–265 (SAYLHSATMVKAGLYLIARMTPI), 270–289 (QGWIWTVTLVGLITLFWASL), 302–324 (AFSTVSQLGMIMAMLGIGAISYH), 339–361 (AAIFHLINHATFKGALFMITGAV), 373–395 (LGGLLTIMPISFTITVITALSMA), 429–451 (YLFPIIGIVGSVFTFVYSIKFIM), 472–494 (ILMLLSPAILATLVIVFGLFPGI), 526–548 (AFLSTLVIYILGILLIVTFSYWV), 589–611 (NNLVIIFGALILLTFVTVFSVPF), 621–641 (IRIFEVCIVILLLSAAFLILF), 646–668 (LFSIIMLSAVGYAVSVLFIFFKA), 672–694 (ALTQFVVESISTALFLLCFYHLP), 707–729 (LTNALIAGGVGLSVIIIGLIAYG), and 767–784 (LFESSVLGIAGLAVYTMI).

The protein belongs to the CPA3 antiporters (TC 2.A.63) subunit A family. May form a heterooligomeric complex that consists of seven subunits: mnhA1, mnhB1, mnhC1, mnhD1, mnhE1, mnhF1 and mnhG1.

It localises to the cell membrane. Na(+) extrusion is completely inhibited by the H(+) conductor carbonyl cyanide m-chlorophenylhydrazone (CCCP). Its function is as follows. Mnh complex is a Na(+)/H(+) antiporter involved in Na(+) excretion. In Staphylococcus aureus (strain MRSA252), this protein is Na(+)/H(+) antiporter subunit A1 (mnhA1).